The primary structure comprises 226 residues: 7-cyano-7-deazaguanine synthase (226 aa).

10–20 (LSGGLDSATAA) provides a ligand contact to ATP. Positions 191, 199, 202, and 205 each coordinate Zn(2+).

This sequence belongs to the QueC family. The cofactor is Zn(2+).

The enzyme catalyses 7-carboxy-7-deazaguanine + NH4(+) + ATP = 7-cyano-7-deazaguanine + ADP + phosphate + H2O + H(+). Its pathway is purine metabolism; 7-cyano-7-deazaguanine biosynthesis. Functionally, catalyzes the ATP-dependent conversion of 7-carboxy-7-deazaguanine (CDG) to 7-cyano-7-deazaguanine (preQ(0)). The protein is 7-cyano-7-deazaguanine synthase of Parasynechococcus marenigrum (strain WH8102).